Consider the following 76-residue polypeptide: Accessory gland-specific peptide 57Dc (76 aa).

The first 20 residues, 1 to 20 (MHGTHFLILLLLCGVLGSNG), serve as a signal peptide directing secretion.

In terms of processing, cAMP-dependent phosphorylation. Lumen fluid of male accessory glands, becomes seminal fluid.

The protein localises to the secreted. Functionally, transferred from male to female during mating and may affect egglaying and behavior after mating. In Drosophila melanogaster (Fruit fly), this protein is Accessory gland-specific peptide 57Dc (Mst57Dc).